Reading from the N-terminus, the 424-residue chain is Zygote arrest protein 1 (424 aa).

Disordered regions lie at residues 125-175 (RTLQ…PMRF) and 196-313 (GPGP…SPEL). Gly residues predominate over residues 141–150 (GAEGTTGGGS). Over residues 289–298 (RARDGGDGRE) the composition is skewed to basic and acidic residues. The segment at 326–409 (KYGYYHCKDC…RQDLCGRCKG (84 aa)) adopts a 3CxxC-type zinc-finger fold.

Belongs to the ZAR1 family. Interacts with YBX2. Ubiquitinated and degradaded by the proteasome during oocyte meiotic maturation, leading to MARDO (mitochondria-associated ribonucleoprotein domain) membraneless compartment dissolution. As to expression, ovary and testis.

It is found in the cytoplasm. It localises to the cytoplasmic ribonucleoprotein granule. MRNA-binding protein that mediates formation of MARDO (mitochondria-associated ribonucleoprotein domain), a membraneless compartment that stores maternal mRNAs in oocytes. MARDO assembly around mitochondria is directed by an increase in mitochondrial membrane potential during oocyte growth. Promotes formation of MARDO phase-separated membraneless compartment by undergoing liquid-liquid phase separation upon binding to maternal mRNAs. Binds to the 3'-UTR of maternal mRNAs. Maternal mRNAs stored in the MARDO are translationally repressed. Essential for female fertility and oocyte-to-embryo transition by coordinating maternal mRNA storage, translation and degradation. The chain is Zygote arrest protein 1 from Homo sapiens (Human).